The sequence spans 258 residues: Oxidoreductase fscI (258 aa).

L34, R59, D82, N109, and K141 together coordinate NADP(+). The active-site Proton donor is the S163. R193 contacts NADP(+).

This sequence belongs to the short-chain dehydrogenases/reductases (SDR) family.

It participates in secondary metabolite biosynthesis. Oxidoreductase; part of the fragmented gene cluster that mediates the biosynthesis of fusarochromene, a tryptophan-derived metabolite closely related to a group of mycotoxins including fusarochromanone. Within the pathway, fscI catalyzes the formation of the chromene ring from the prenyl moity added by the prenyltransferase fscG. The first step of the pathway is the epimerization of L-tryptophan to D-tryptophan in the presence of the NRPS-like tryptophan epimerase fscC. D-tryptophan is subsequently hydroxylated by the tryptophan 6-hydroxylase fscE to yield 6-hydroxytryptophan. The pyrrole ring undergoes cleavaged by the tryptophan 2,3-dioxygenase fscD and is finally converted to 4-hydroxykyrunenine by the hydrolase fscH. The NRPS-like oxidoreductase fscA reduces the carboxyl group to primary alcohol and the DMATS-type prenyltransferase fscG performs prenylation, followed by the formation of a chromene ring catalyzed by the oxidoreductase fscI, which leads to desacetylfusarochromene. Epoxidation by fscF and rearrangement reactions of chromene double bonds convert compound desacetylfusarochromene to fusarochromanones. Although specific acetyltransferases were not found near the fsc gene cluster, several predicted enzymes containing the N-acetyltransferase superfamily domain are present in the genome of F.equiseti. These predicted enzymes may have the potential to convert desacetylfusarochromene to fusarochromene. This Fusarium equiseti (Fusarium scirpi) protein is Oxidoreductase fscI.